A 550-amino-acid polypeptide reads, in one-letter code: Iduronate 2-sulfatase (550 aa).

Positions 1-25 (MPPPRTGRGLLWLGLVLSSVCVALG) are cleaved as a signal peptide. The propeptide occupies 26 to 33 (SETQANST). Ca(2+) contacts are provided by aspartate 45, aspartate 46, and cysteine 84. Catalysis depends on cysteine 84, which acts as the Nucleophile. At cysteine 84 the chain carries 3-oxoalanine (Cys). Residue asparagine 115 is glycosylated (N-linked (GlcNAc...) asparagine). The active site involves histidine 138. Asparagine 144 carries N-linked (GlcNAc...) asparagine glycosylation. Cysteine 171 and cysteine 184 are oxidised to a cystine. Residues asparagine 246, asparagine 280, and asparagine 325 are each glycosylated (N-linked (GlcNAc...) asparagine). Aspartate 334 and histidine 335 together coordinate Ca(2+). Cysteine 422 and cysteine 432 are joined by a disulfide. N-linked (GlcNAc...) asparagine glycosylation is found at asparagine 513 and asparagine 537.

It belongs to the sulfatase family. Monomer. The 58-kDa mature form is composed of two chains resulting from proteolitic processing, the 42-kDa chain and the 14-kDa chain that remain stably associated and form the 58-kDa intermediate form which is enzymatically active. The cofactor is Ca(2+). Post-translationally, synthesized as a 75-kDa precursor form in the endoplasmic reticulum (ER), and then processed by proteolytic cleavage through various intermediates to yield a 55-kDa mature form, with the release of an 18 kDa polypeptide. In terms of processing, the conversion to 3-oxoalanine (also known as C-formylglycine, FGly), of a serine or cysteine residue in prokaryotes and of a cysteine residue in eukaryotes, is critical for catalytic activity. In terms of tissue distribution, liver, kidney, lung, and placenta.

The protein localises to the lysosome. The enzyme catalyses Hydrolysis of the 2-sulfate groups of the L-iduronate 2-sulfate units of dermatan sulfate, heparan sulfate and heparin.. In terms of biological role, lysosomal enzyme involved in the degradation pathway of dermatan sulfate and heparan sulfate. The protein is Iduronate 2-sulfatase (IDS) of Homo sapiens (Human).